The sequence spans 651 residues: Acetyl-coenzyme A synthetase (651 aa).

CoA-binding positions include 189–192 (RGGK), Thr-311, and Asn-335. ATP is bound by residues 387-389 (GEP), 411-416 (DTWWQT), Asp-500, and Arg-515. Ser-523 is a CoA binding site. ATP is bound at residue Arg-526. Mg(2+) is bound by residues Val-537, His-539, and Val-542. Arg-586 provides a ligand contact to CoA. Residue Lys-611 is modified to N6-acetyllysine.

It belongs to the ATP-dependent AMP-binding enzyme family. Mg(2+) is required as a cofactor. In terms of processing, acetylated. Deacetylation by the SIR2-homolog deacetylase activates the enzyme.

The catalysed reaction is acetate + ATP + CoA = acetyl-CoA + AMP + diphosphate. In terms of biological role, catalyzes the conversion of acetate into acetyl-CoA (AcCoA), an essential intermediate at the junction of anabolic and catabolic pathways. AcsA undergoes a two-step reaction. In the first half reaction, AcsA combines acetate with ATP to form acetyl-adenylate (AcAMP) intermediate. In the second half reaction, it can then transfer the acetyl group from AcAMP to the sulfhydryl group of CoA, forming the product AcCoA. The chain is Acetyl-coenzyme A synthetase from Brucella melitensis biotype 2 (strain ATCC 23457).